A 953-amino-acid chain; its full sequence is Zinc finger protein 507 (953 aa).

Phosphoserine is present on Ser95. 3 C2H2-type zinc fingers span residues 125–147 (YQCS…IKQH), 155–185 (LMCS…ANIH), and 248–270 (YRCL…AWKH). The residue at position 427 (Ser427) is a Phosphoserine. The segment at 470-489 (KGLATDENAPPGRRRTNSES) is disordered. 5 consecutive C2H2-type zinc fingers follow at residues 641 to 663 (YRCR…LRVH), 669 to 691 (YQCP…MIHH), 697 to 720 (YQCK…REQH), 758 to 780 (YRCD…RRIH), and 786 to 808 (YRCS…MWKH). The segment at 831 to 891 (GRVLGKTPGK…KLSPTSNTSY (61 aa)) is disordered. Polar residues predominate over residues 854–891 (TGSSENAVSSSELMSQTPSEVLGTNENEKLSPTSNTSY). The C2H2-type 9 zinc finger occupies 911–933 (FCCCICGFESTSKENLLDHMKEH).

Belongs to the krueppel C2H2-type zinc-finger protein family.

It localises to the nucleus. In terms of biological role, may be involved in transcriptional regulation. This chain is Zinc finger protein 507 (ZNF507), found in Pongo abelii (Sumatran orangutan).